A 276-amino-acid polypeptide reads, in one-letter code: Undecaprenyl-diphosphatase 1 (276 aa).

Helical transmembrane passes span 4-24 (ILIC…FLPV), 45-62 (KTFD…VCWE), 83-103 (FTLN…LFEK), 108-128 (VLFS…IILW), 187-207 (VATE…TLYE), 217-237 (VDSL…AFVC), and 252-272 (VFAW…YSGW).

It belongs to the UppP family.

It is found in the cell inner membrane. The catalysed reaction is di-trans,octa-cis-undecaprenyl diphosphate + H2O = di-trans,octa-cis-undecaprenyl phosphate + phosphate + H(+). Functionally, catalyzes the dephosphorylation of undecaprenyl diphosphate (UPP). Confers resistance to bacitracin. This chain is Undecaprenyl-diphosphatase 1, found in Burkholderia ambifaria (strain ATCC BAA-244 / DSM 16087 / CCUG 44356 / LMG 19182 / AMMD) (Burkholderia cepacia (strain AMMD)).